We begin with the raw amino-acid sequence, 597 residues long: Elongation factor 4 (597 aa).

The tr-type G domain maps to 2–184; sequence KNIRNFSIIA…EIVAKIPAPA (183 aa). GTP-binding positions include 14–19 and 131–134; these read DHGKST and NKID.

This sequence belongs to the TRAFAC class translation factor GTPase superfamily. Classic translation factor GTPase family. LepA subfamily.

Its subcellular location is the cell inner membrane. The catalysed reaction is GTP + H2O = GDP + phosphate + H(+). In terms of biological role, required for accurate and efficient protein synthesis under certain stress conditions. May act as a fidelity factor of the translation reaction, by catalyzing a one-codon backward translocation of tRNAs on improperly translocated ribosomes. Back-translocation proceeds from a post-translocation (POST) complex to a pre-translocation (PRE) complex, thus giving elongation factor G a second chance to translocate the tRNAs correctly. Binds to ribosomes in a GTP-dependent manner. The sequence is that of Elongation factor 4 from Neisseria meningitidis serogroup A / serotype 4A (strain DSM 15465 / Z2491).